The chain runs to 159 residues: Ribosomal RNA large subunit methyltransferase H (159 aa).

S-adenosyl-L-methionine is bound by residues Leu-76, Gly-108, and 127–132 (LSDMTF).

It belongs to the RNA methyltransferase RlmH family. Homodimer.

It localises to the cytoplasm. It carries out the reaction pseudouridine(1915) in 23S rRNA + S-adenosyl-L-methionine = N(3)-methylpseudouridine(1915) in 23S rRNA + S-adenosyl-L-homocysteine + H(+). Functionally, specifically methylates the pseudouridine at position 1915 (m3Psi1915) in 23S rRNA. The sequence is that of Ribosomal RNA large subunit methyltransferase H from Acetivibrio thermocellus (strain ATCC 27405 / DSM 1237 / JCM 9322 / NBRC 103400 / NCIMB 10682 / NRRL B-4536 / VPI 7372) (Clostridium thermocellum).